We begin with the raw amino-acid sequence, 344 residues long: Phosphate acyltransferase (344 aa).

Belongs to the PlsX family. Homodimer. Probably interacts with PlsY.

The protein localises to the cytoplasm. The catalysed reaction is a fatty acyl-[ACP] + phosphate = an acyl phosphate + holo-[ACP]. Its pathway is lipid metabolism; phospholipid metabolism. Catalyzes the reversible formation of acyl-phosphate (acyl-PO(4)) from acyl-[acyl-carrier-protein] (acyl-ACP). This enzyme utilizes acyl-ACP as fatty acyl donor, but not acyl-CoA. The polypeptide is Phosphate acyltransferase (Blochmanniella floridana).